Reading from the N-terminus, the 556-residue chain is Hydroxylamine reductase (556 aa).

[4Fe-4S] cluster contacts are provided by C5, C8, C17, and C23. Hybrid [4Fe-2O-2S] cluster contacts are provided by H249, E273, C317, C409, C437, C462, E497, and K499. Position 409 is a cysteine persulfide (C409).

It belongs to the HCP family. Requires [4Fe-4S] cluster as cofactor. The cofactor is hybrid [4Fe-2O-2S] cluster.

It localises to the cytoplasm. The catalysed reaction is A + NH4(+) + H2O = hydroxylamine + AH2 + H(+). Functionally, catalyzes the reduction of hydroxylamine to form NH(3) and H(2)O. In Kosmotoga olearia (strain ATCC BAA-1733 / DSM 21960 / TBF 19.5.1), this protein is Hydroxylamine reductase.